We begin with the raw amino-acid sequence, 1412 residues long: DNA-directed RNA polymerase subunit beta' (1412 aa).

Positions 70, 72, 85, and 88 each coordinate Zn(2+). Mg(2+) is bound by residues aspartate 460, aspartate 462, and aspartate 464. Residues cysteine 819, cysteine 893, cysteine 900, and cysteine 903 each contribute to the Zn(2+) site. The tract at residues 1392–1412 is disordered; sequence EEAFEFGTPSAPAEEPQHPAE.

The protein belongs to the RNA polymerase beta' chain family. In terms of assembly, the RNAP catalytic core consists of 2 alpha, 1 beta, 1 beta' and 1 omega subunit. When a sigma factor is associated with the core the holoenzyme is formed, which can initiate transcription. Mg(2+) serves as cofactor. It depends on Zn(2+) as a cofactor.

The enzyme catalyses RNA(n) + a ribonucleoside 5'-triphosphate = RNA(n+1) + diphosphate. Its function is as follows. DNA-dependent RNA polymerase catalyzes the transcription of DNA into RNA using the four ribonucleoside triphosphates as substrates. This chain is DNA-directed RNA polymerase subunit beta', found in Burkholderia mallei (strain NCTC 10247).